Here is a 24-residue protein sequence, read N- to C-terminus: Brevinin-1E (24 aa).

Cysteine 18 and cysteine 24 are disulfide-bonded.

In terms of tissue distribution, expressed by the skin glands.

The protein resides in the secreted. Antimicrobial peptide. Stimulates insulin release by BRIN-BD11 cells in vitro. This chain is Brevinin-1E, found in Pelophylax saharicus (Sahara frog).